The sequence spans 139 residues: NADPH-dependent 7-cyano-7-deazaguanine reductase (139 aa).

Cysteine 34 acts as the Thioimide intermediate in catalysis. Aspartate 41 acts as the Proton donor in catalysis. Residues valine 56 to leucine 58 and histidine 75 to glutamate 76 each bind substrate.

Belongs to the GTP cyclohydrolase I family. QueF type 1 subfamily.

It is found in the cytoplasm. It catalyses the reaction 7-aminomethyl-7-carbaguanine + 2 NADP(+) = 7-cyano-7-deazaguanine + 2 NADPH + 3 H(+). Its pathway is tRNA modification; tRNA-queuosine biosynthesis. In terms of biological role, catalyzes the NADPH-dependent reduction of 7-cyano-7-deazaguanine (preQ0) to 7-aminomethyl-7-deazaguanine (preQ1). The polypeptide is NADPH-dependent 7-cyano-7-deazaguanine reductase (Methylobacillus flagellatus (strain ATCC 51484 / DSM 6875 / VKM B-1610 / KT)).